A 326-amino-acid polypeptide reads, in one-letter code: Homocysteine S-methyltransferase 1 (326 aa).

The Hcy-binding domain maps to L9 to L323. Zn(2+) is bound by residues C241, C308, and C309.

Requires Zn(2+) as cofactor. Expressed in roots, young leaves, florets and flowers. Not detected in old leaves.

It carries out the reaction S-methyl-L-methionine + L-homocysteine = 2 L-methionine + H(+). Inhibited by L-methionine. Functionally, catalyzes methyl transfer from S-methylmethionine to homocysteine. The highest preference is for DL-homocysteine &gt;&gt; DL-cysteine. Has no selenocysteine methyltransferase activity. This chain is Homocysteine S-methyltransferase 1 (HMT1), found in Brassica oleracea var. italica (Broccoli).